The primary structure comprises 252 residues: tRNA-cytidine(32) 2-sulfurtransferase (252 aa).

The PP-loop motif motif lies at 37 to 42 (SGGKDS). Cys-112, Cys-115, and Cys-202 together coordinate [4Fe-4S] cluster.

Belongs to the TtcA family. As to quaternary structure, homodimer. Requires Mg(2+) as cofactor. The cofactor is [4Fe-4S] cluster.

The protein resides in the cytoplasm. It catalyses the reaction cytidine(32) in tRNA + S-sulfanyl-L-cysteinyl-[cysteine desulfurase] + AH2 + ATP = 2-thiocytidine(32) in tRNA + L-cysteinyl-[cysteine desulfurase] + A + AMP + diphosphate + H(+). It functions in the pathway tRNA modification. Functionally, catalyzes the ATP-dependent 2-thiolation of cytidine in position 32 of tRNA, to form 2-thiocytidine (s(2)C32). The sulfur atoms are provided by the cysteine/cysteine desulfurase (IscS) system. This chain is tRNA-cytidine(32) 2-sulfurtransferase, found in Geotalea daltonii (strain DSM 22248 / JCM 15807 / FRC-32) (Geobacter daltonii).